Here is a 113-residue protein sequence, read N- to C-terminus: Large ribosomal subunit protein uL24 (113 aa).

This sequence belongs to the universal ribosomal protein uL24 family. Part of the 50S ribosomal subunit.

In terms of biological role, one of two assembly initiator proteins, it binds directly to the 5'-end of the 23S rRNA, where it nucleates assembly of the 50S subunit. Its function is as follows. One of the proteins that surrounds the polypeptide exit tunnel on the outside of the subunit. The polypeptide is Large ribosomal subunit protein uL24 (Micrococcus luteus (strain ATCC 4698 / DSM 20030 / JCM 1464 / CCM 169 / CCUG 5858 / IAM 1056 / NBRC 3333 / NCIMB 9278 / NCTC 2665 / VKM Ac-2230) (Micrococcus lysodeikticus)).